The following is a 932-amino-acid chain: Glycine dehydrogenase (decarboxylating) (932 aa).

K685 is modified (N6-(pyridoxal phosphate)lysine).

This sequence belongs to the GcvP family. The glycine cleavage system is composed of four proteins: P, T, L and H. Pyridoxal 5'-phosphate serves as cofactor.

The enzyme catalyses N(6)-[(R)-lipoyl]-L-lysyl-[glycine-cleavage complex H protein] + glycine + H(+) = N(6)-[(R)-S(8)-aminomethyldihydrolipoyl]-L-lysyl-[glycine-cleavage complex H protein] + CO2. Its function is as follows. The glycine cleavage system catalyzes the degradation of glycine. The P protein binds the alpha-amino group of glycine through its pyridoxal phosphate cofactor; CO(2) is released and the remaining methylamine moiety is then transferred to the lipoamide cofactor of the H protein. This chain is Glycine dehydrogenase (decarboxylating), found in Brucella melitensis biotype 2 (strain ATCC 23457).